Consider the following 261-residue polypeptide: uncharacterized protein (261 aa).

Over residues 1–12 (MSRTSSQNQEII) the composition is skewed to polar residues. The tract at residues 1-139 (MSRTSSQNQE…KELDTINKKT (139 aa)) is disordered. The span at 23–55 (SSKPSKSSKPSKSSKPSKSSKTSKSSRSSGSKS) shows a compositional bias: low complexity. Over residues 65 to 74 (SRKDKYKEEY) the composition is skewed to basic and acidic residues. Acidic residues predominate over residues 79–108 (YPDEQEYEQEYEQEYEQEYQDNGEQTEEFV). Over residues 122 to 139 (DERQTQSNKELDTINKKT) the composition is skewed to basic and acidic residues. Coiled-coil stretches lie at residues 151–181 (MDHD…IIKL) and 218–243 (EDII…KKIE).

This is an uncharacterized protein from Acanthamoeba polyphaga (Amoeba).